The sequence spans 376 residues: Growth/differentiation factor 8 (376 aa).

The first 24 residues, 1–24 (MMQKLQMYVYIYLFMLIAAGPVDL), serve as a signal peptide directing secretion. Residues 25–267 (NEGSEREENV…VTDTPKRSRR (243 aa)) constitute a propeptide that is removed on maturation. N-linked (GlcNAc...) asparagine glycosylation is present at Asn72. 4 disulfides stabilise this stretch: Cys273-Cys283, Cys282-Cys341, Cys310-Cys373, and Cys314-Cys375.

It belongs to the TGF-beta family. As to quaternary structure, homodimer; disulfide-linked. Interacts with WFIKKN2, leading to inhibit its activity. Interacts with FSTL3. Post-translationally, synthesized as large precursor molecule that undergoes proteolytic cleavage to generate an N-terminal propeptide and a disulfide linked C-terminal dimer, which is the biologically active molecule. The circulating form consists of a latent complex of the C-terminal dimer and other proteins, including its propeptide, which maintain the C-terminal dimer in a latent, inactive state. Ligand activation requires additional cleavage of the prodomain by a tolloid-like metalloproteinase. As to expression, expressed specifically in developing and adult skeletal muscle. Weak expression in adipose tissue.

The protein localises to the secreted. Acts specifically as a negative regulator of skeletal muscle growth. The sequence is that of Growth/differentiation factor 8 (Mstn) from Mus musculus (Mouse).